Consider the following 239-residue polypeptide: Prolyl hydroxylase EGLN3 (239 aa).

The segment at 62 to 73 is beta(2)beta(3) 'finger-like' loop; that stretch reads AGPRAGVSKRHL. Residues 88 to 104 form a required for interaction with ADRB2 region; it reads CEAINFLLSLIDRLVLY. A Fe2OG dioxygenase domain is found at 116–214; the sequence is ERSKAMVACY…RYAMTVWYFD (99 aa). Fe cation contacts are provided by His-135, Asp-137, and His-196. Position 205 (Arg-205) interacts with 2-oxoglutarate.

In terms of assembly, interacts with ADRB2; the interaction hydroxylates ADRB2 facilitating its ubiquitination by the VHL-E3 ligase complex. Interacts with PKM; the interaction hydroxylates PKM in hypoxia. Interacts with WDR83; the interaction leads to almost complete elimination of HIF-mediated reporter activity. Interacts with BCL2 (via its BH4 domain); the interaction disrupts the BAX-BCL4 complex inhibiting the anti-apoptotic activity of BCL2. Interacts with LIMD1, WTIP and AJUBA. Requires Fe(2+) as cofactor. It depends on L-ascorbate as a cofactor. Post-translationally, ubiquitinated by SIAH1 and/or SIAH2 in response to the unfolded protein response (UPR), leading to its degradation. Highly expressed in cardiac and smooth muscle. Also high expression in brain, skeletal muscle and kidney. Low levels in lung.

It is found in the nucleus. Its subcellular location is the cytoplasm. It catalyses the reaction L-prolyl-[protein] + 2-oxoglutarate + O2 = trans-4-hydroxy-L-prolyl-[protein] + succinate + CO2. The catalysed reaction is L-prolyl-[hypoxia-inducible factor alpha subunit] + 2-oxoglutarate + O2 = trans-4-hydroxy-L-prolyl-[hypoxia-inducible factor alpha subunit] + succinate + CO2. In terms of biological role, prolyl hydroxylase that mediates hydroxylation of proline residues in target proteins, such as PKM, TELO2, ATF4 and HIF1A. Target proteins are preferentially recognized via a LXXLAP motif. Cellular oxygen sensor that catalyzes, under normoxic conditions, the post-translational formation of 4-hydroxyproline in hypoxia-inducible factor (HIF) alpha proteins. Hydroxylates a specific proline found in each of the oxygen-dependent degradation (ODD) domains (N-terminal, NODD, and C-terminal, CODD) of HIF1A. Also hydroxylates HIF2A. Has a preference for the CODD site for both HIF1A and HIF2A. Hydroxylation on the NODD site by EGLN3 appears to require prior hydroxylation on the CODD site. Hydroxylated HIFs are then targeted for proteasomal degradation via the von Hippel-Lindau ubiquitination complex. Under hypoxic conditions, the hydroxylation reaction is attenuated allowing HIFs to escape degradation resulting in their translocation to the nucleus, heterodimerization with HIF1B, and increased expression of hypoxy-inducible genes. ELGN3 is the most important isozyme in limiting physiological activation of HIFs (particularly HIF2A) in hypoxia. Also hydroxylates PKM in hypoxia, limiting glycolysis. Under normoxia, hydroxylates and regulates the stability of ADRB2. Regulator of cardiomyocyte and neuronal apoptosis. In cardiomyocytes, inhibits the anti-apoptotic effect of BCL2 by disrupting the BAX-BCL2 complex. In neurons, has a NGF-induced proapoptotic effect, probably through regulating CASP3 activity. Also essential for hypoxic regulation of neutrophilic inflammation. Plays a crucial role in DNA damage response (DDR) by hydroxylating TELO2, promoting its interaction with ATR which is required for activation of the ATR/CHK1/p53 pathway. Also mediates hydroxylation of ATF4, leading to decreased protein stability of ATF4. The chain is Prolyl hydroxylase EGLN3 from Mus musculus (Mouse).